The sequence spans 429 residues: Ribosomal RNA small subunit methyltransferase B (429 aa).

S-adenosyl-L-methionine contacts are provided by residues 254-260 (CAGPGGK), aspartate 277, aspartate 303, and aspartate 322. Cysteine 375 (nucleophile) is an active-site residue.

Belongs to the class I-like SAM-binding methyltransferase superfamily. RsmB/NOP family.

It is found in the cytoplasm. It carries out the reaction cytidine(967) in 16S rRNA + S-adenosyl-L-methionine = 5-methylcytidine(967) in 16S rRNA + S-adenosyl-L-homocysteine + H(+). In terms of biological role, specifically methylates the cytosine at position 967 (m5C967) of 16S rRNA. This Escherichia coli O6:K15:H31 (strain 536 / UPEC) protein is Ribosomal RNA small subunit methyltransferase B.